The following is a 122-amino-acid chain: Ribonuclease P protein component (122 aa).

Belongs to the RnpA family. Consists of a catalytic RNA component (M1 or rnpB) and a protein subunit.

It catalyses the reaction Endonucleolytic cleavage of RNA, removing 5'-extranucleotides from tRNA precursor.. RNaseP catalyzes the removal of the 5'-leader sequence from pre-tRNA to produce the mature 5'-terminus. It can also cleave other RNA substrates such as 4.5S RNA. The protein component plays an auxiliary but essential role in vivo by binding to the 5'-leader sequence and broadening the substrate specificity of the ribozyme. The chain is Ribonuclease P protein component from Oenococcus oeni (strain ATCC BAA-331 / PSU-1).